Here is a 984-residue protein sequence, read N- to C-terminus: Pre-mRNA-splicing factor cwf10 (984 aa).

The tract at residues 1 to 28 (MMEEDLYDEFGNYIGPENEEDEEELFPQ) is disordered. In terms of domain architecture, tr-type G spans 139 to 402 (DDVRSFIVAG…HTLTISDEAE (264 aa)). The segment at 148 to 155 (GHLHHGKS) is G1. Residue 148–155 (GHLHHGKS) participates in GTP binding. The interval 190–194 (VMSIK) is G2. The G3 stretch occupies residues 216–219 (DTPG). Residues 216 to 220 (DTPGH) and 270 to 273 (NKVD) each bind GTP. The tract at residues 270–273 (NKVD) is G4. The G5 stretch occupies residues 371–373 (QSL).

It belongs to the TRAFAC class translation factor GTPase superfamily. Classic translation factor GTPase family. EF-G/EF-2 subfamily. As to quaternary structure, belongs to the 40S cdc5-associated complex (or cwf complex), a spliceosome sub-complex reminiscent of a late-stage spliceosome composed of the U2, U5 and U6 snRNAs and at least brr2, cdc5, cwf2/prp3, cwf3/syf1, cwf4/syf3, cwf5/ecm2, spp42/cwf6, cwf7/spf27, cwf8, cwf9, cwf10, cwf11, cwf12, prp45/cwf13, cwf14, cwf15, cwf16, cwf17, cwf18, cwf19, cwf20, cwf21, cwf22, cwf23, cwf24, cwf25, cwf26, cyp7/cwf27, cwf28, cwf29/ist3, lea1, msl1, prp5/cwf1, prp10, prp12/sap130, prp17, prp22, sap61, sap62, sap114, sap145, slu7, smb1, smd1, smd3, smf1, smg1 and syf2.

It is found in the cytoplasm. Its subcellular location is the nucleus. Its function is as follows. Component of the U5 snRNP complex required for pre-mRNA splicing. Binds GTP. The protein is Pre-mRNA-splicing factor cwf10 (cwf10) of Schizosaccharomyces pombe (strain 972 / ATCC 24843) (Fission yeast).